A 203-amino-acid chain; its full sequence is MYKKNIKIRNLGLRRIQDVCSSMNDFTITRKISTPDEIWLVQHYPVFTIGVSGTKHDVLVSNNIPIIFSNRGGKITYHAPGQLIIYVLINLFRRKLTVRRLILLMQNIIISTLKSFSIDSYILNNFPGVYVNNKKICSLGLRIRNGCSFHGMALNINMDLLPFEYINPCGNSFKMTQVIDIKPNLCFKIIKLMLMHKIREIFS.

The BPL/LPL catalytic domain maps to 32-203 (ISTPDEIWLV…LMHKIREIFS (172 aa)). Residues 71 to 78 (RGGKITYH), 138 to 140 (SLG), and 151 to 153 (GMA) contribute to the substrate site. The active-site Acyl-thioester intermediate is the Cys-169.

Belongs to the LipB family.

The protein localises to the cytoplasm. The catalysed reaction is octanoyl-[ACP] + L-lysyl-[protein] = N(6)-octanoyl-L-lysyl-[protein] + holo-[ACP] + H(+). Its pathway is protein modification; protein lipoylation via endogenous pathway; protein N(6)-(lipoyl)lysine from octanoyl-[acyl-carrier-protein]: step 1/2. Functionally, catalyzes the transfer of endogenously produced octanoic acid from octanoyl-acyl-carrier-protein onto the lipoyl domains of lipoate-dependent enzymes. Lipoyl-ACP can also act as a substrate although octanoyl-ACP is likely to be the physiological substrate. This chain is Octanoyltransferase, found in Buchnera aphidicola subsp. Baizongia pistaciae (strain Bp).